The following is a 125-amino-acid chain: Cholecystokinin-8 (125 aa).

The N-terminal stretch at 1 to 20 (MYSGICSCLFLAVLSSSSLG) is a signal peptide. The propeptide occupies 21–105 (QQISGSQHAN…FDPTHRIKDR (85 aa)). The residue at position 107 (Tyr-107) is a Sulfotyrosine. Residue Phe-113 is modified to Phenylalanine amide. A propeptide spanning residues 114–125 (GRRSAEEYEYSS) is cleaved from the precursor.

This sequence belongs to the gastrin/cholecystokinin family.

It is found in the secreted. In terms of biological role, hypotensive neuropeptide that binds cholecystokinin receptors (CCKAR). This chain is Cholecystokinin-8 (CCK), found in Python molurus (Indian python).